The chain runs to 398 residues: S-adenosylmethionine synthase (398 aa).

ATP is bound at residue His-16. Asp-18 contributes to the Mg(2+) binding site. Glu-44 is a binding site for K(+). The L-methionine site is built by Glu-57 and Gln-100. The tract at residues Gln-100–Glu-110 is flexible loop. Residues Asp-175 to Lys-177, Arg-242 to Phe-243, Asp-251, Arg-257 to Lys-258, Ala-274, and Lys-278 each bind ATP. Residue Asp-251 coordinates L-methionine. Lys-282 provides a ligand contact to L-methionine.

This sequence belongs to the AdoMet synthase family. In terms of assembly, homotetramer; dimer of dimers. Mg(2+) serves as cofactor. K(+) is required as a cofactor.

It is found in the cytoplasm. The enzyme catalyses L-methionine + ATP + H2O = S-adenosyl-L-methionine + phosphate + diphosphate. It participates in amino-acid biosynthesis; S-adenosyl-L-methionine biosynthesis; S-adenosyl-L-methionine from L-methionine: step 1/1. In terms of biological role, catalyzes the formation of S-adenosylmethionine (AdoMet) from methionine and ATP. The overall synthetic reaction is composed of two sequential steps, AdoMet formation and the subsequent tripolyphosphate hydrolysis which occurs prior to release of AdoMet from the enzyme. This chain is S-adenosylmethionine synthase, found in Streptococcus agalactiae serotype III (strain NEM316).